The primary structure comprises 685 residues: Twinkle mtDNA helicase (685 aa).

A mitochondrion-targeting transit peptide spans 1–31; the sequence is MWLLLRRAYPLRILLPLRGEWVGRRGLPRSL. The interval 1–122 is contributes to single strand DNA binding activity; sequence MWLLLRRAYP…LCMTSLAEGS (122 aa). The interval 54 to 214 is N-terminal region (NTR); sequence PVTTTEIRQY…LVFPWFTPGS (161 aa). Residues 122–373 are required for hexamers formation and DNA helicase activity; the sequence is SWEDLQASVE…WHKSIVSFRQ (252 aa). Residues 215–335 form a primase-like domain region; sequence SGLRGLKLLG…LNPKRCSLVR (121 aa). The SF4 helicase domain occupies 385 to 636; sequence VEQAAGVRWS…LTFSIPPKSK (252 aa). The segment at 406–591 is maybe required for stable oligomeric structure; the sequence is HRKGELTVFT…QEADNVLILQ (186 aa). Residue 416 to 423 coordinates ATP; it reads GPTGSGKT. Residues 454–482 are a coiled coil; sequence RVMLTQFAVTRLEEQLDKYEEWADRFEDL. The interval 641-685 is might negatively regulate ATPase activity; it reads KIKDDNGLVAKKSSSGKKGAAHQNPEICLGQDPSPAQPDTSKSSG. The interval 642–685 is disordered; it reads IKDDNGLVAKKSSSGKKGAAHQNPEICLGQDPSPAQPDTSKSSG.

As to quaternary structure, homohexamer (via C-terminus), which assembles in a ring-like structure. Homoheptamer, which assembles in a ring-like structure. Homooctamer, which assembles in a ring-like structure. Oligomers may sequentially eject two monomers (octamer&gt;heptamer&gt;hexamer) upon DNA binding. Oligomerization is Mg(2+), nucleotide and DNA-independent, however, Mg(2+) and nucleotide stabilize the homohexameric form. Interacts with POLG in vitro. Interacts with LONP1. Ubiquitous with the highest levels in the liver, heart and kidneys. The skeletal muscle, brain and testis showed lower but detectable expression. Expression is coregulated with MRPL43.

Its subcellular location is the mitochondrion matrix. It is found in the mitochondrion nucleoid. The protein localises to the mitochondrion inner membrane. The enzyme catalyses ATP + H2O = ADP + phosphate + H(+). It carries out the reaction Couples ATP hydrolysis with the unwinding of duplex DNA at the replication fork by translocating in the 5'-3' direction. This creates two antiparallel DNA single strands (ssDNA). The leading ssDNA polymer is the template for DNA polymerase III holoenzyme which synthesizes a continuous strand.. Mitochondrial helicase involved in mtDNA replication and repair. Might have a role in mtDNA repair. Has DNA strand separation activity needed to form a processive replication fork for leading strand synthesis which is catalyzed by the formation of a replisome complex with POLG and mtSDB. Preferentially unwinds DNA substrates with pre-existing 5'-and 3'- single-stranded tails but is also active on a 5'- flap substrate. Can dissociate the invading strand of immobile or mobile D-loop DNA structures irrespective of the single strand polarity of the third strand. In addition to its DNA strand separation activity, also has DNA strand annealing, DNA strand-exchange and DNA branch migration activities. The sequence is that of Twinkle mtDNA helicase from Mus musculus (Mouse).